We begin with the raw amino-acid sequence, 372 residues long: Peptide chain release factor 2 (372 aa).

At Q253 the chain carries N5-methylglutamine.

The protein belongs to the prokaryotic/mitochondrial release factor family. Post-translationally, methylated by PrmC. Methylation increases the termination efficiency of RF2.

It localises to the cytoplasm. In terms of biological role, peptide chain release factor 2 directs the termination of translation in response to the peptide chain termination codons UGA and UAA. The polypeptide is Peptide chain release factor 2 (Mycolicibacterium gilvum (strain PYR-GCK) (Mycobacterium gilvum (strain PYR-GCK))).